Here is a 1134-residue protein sequence, read N- to C-terminus: MMS19 nucleotide excision repair protein homolog (1134 aa).

HEAT repeat units follow at residues glutamine 959–valine 998, leucine 1002–glutamine 1047, serine 1050–arginine 1089, and tyrosine 1092–glycine 1130.

It belongs to the MET18/MMS19 family. As to quaternary structure, part of a complex composed of AE7, CIA1, MMS19 and NAR1. Interacts with AE7.

Its subcellular location is the nucleus. The protein localises to the cytoplasm. In terms of biological role, may select specific target apoproteins to which a Fe-S cluster produced by the cytosolic iron-sulfur (Fe-S) protein assembly (CIA) pathway is transferred. This chain is MMS19 nucleotide excision repair protein homolog, found in Arabidopsis thaliana (Mouse-ear cress).